A 404-amino-acid chain; its full sequence is Zinc finger TRAF-type-containing protein 1 (404 aa).

A compositionally biased stretch (gly residues) spans 1-13 (MSGAEEAGGGGPA). A disordered region spans residues 1-22 (MSGAEEAGGGGPAAGPAGSVPA). The segment at 111-156 (CTVCLDLPKASVYQCTNGHLMCAGCFIHLLADARLKEEQATCPNCR) adopts an RING-type; degenerate zinc-finger fold. The TRAF-type zinc-finger motif lies at 152–225 (CPNCRCEISK…PWHGPFHELT (74 aa)).

The protein belongs to the ZFTRAF1 family. As to quaternary structure, interacts with LGALS3.

It is found in the cytoplasm. The protein resides in the perinuclear region. This chain is Zinc finger TRAF-type-containing protein 1, found in Homo sapiens (Human).